Here is a 207-residue protein sequence, read N- to C-terminus: Guanylate kinase (207 aa).

A Guanylate kinase-like domain is found at 5 to 184; the sequence is GNLFIVSAPS…ALADLRAIIR (180 aa). 12 to 19 lines the ATP pocket; that stretch reads APSGAGKS.

Belongs to the guanylate kinase family.

The protein localises to the cytoplasm. The catalysed reaction is GMP + ATP = GDP + ADP. In terms of biological role, essential for recycling GMP and indirectly, cGMP. This Shewanella sp. (strain MR-7) protein is Guanylate kinase.